Reading from the N-terminus, the 79-residue chain is Acyl carrier protein (79 aa).

One can recognise a Carrier domain in the interval 2–77 (ENIEQRVKKI…QAIDYVTAHL (76 aa)). O-(pantetheine 4'-phosphoryl)serine is present on serine 37.

The protein belongs to the acyl carrier protein (ACP) family. In terms of processing, 4'-phosphopantetheine is transferred from CoA to a specific serine of apo-ACP by AcpS. This modification is essential for activity because fatty acids are bound in thioester linkage to the sulfhydryl of the prosthetic group.

It localises to the cytoplasm. It participates in lipid metabolism; fatty acid biosynthesis. In terms of biological role, carrier of the growing fatty acid chain in fatty acid biosynthesis. This is Acyl carrier protein from Aromatoleum aromaticum (strain DSM 19018 / LMG 30748 / EbN1) (Azoarcus sp. (strain EbN1)).